Reading from the N-terminus, the 350-residue chain is Uroporphyrinogen decarboxylase (350 aa).

Substrate contacts are provided by residues 27-31, Phe-46, Asp-76, Tyr-152, Ser-207, and His-321; that span reads RQAGR.

This sequence belongs to the uroporphyrinogen decarboxylase family. Homodimer.

The protein localises to the cytoplasm. The enzyme catalyses uroporphyrinogen III + 4 H(+) = coproporphyrinogen III + 4 CO2. The protein operates within porphyrin-containing compound metabolism; protoporphyrin-IX biosynthesis; coproporphyrinogen-III from 5-aminolevulinate: step 4/4. In terms of biological role, catalyzes the decarboxylation of four acetate groups of uroporphyrinogen-III to yield coproporphyrinogen-III. This Listeria innocua serovar 6a (strain ATCC BAA-680 / CLIP 11262) protein is Uroporphyrinogen decarboxylase.